Consider the following 340-residue polypeptide: Ephrin-B3 (340 aa).

An N-terminal signal peptide occupies residues 1 to 27 (MGPPHSGPGGVRVGALLLLGVLGLVSG). The Ephrin RBD domain maps to 28 to 167 (LSLEPVYWNS…TRGMKVLLRV (140 aa)). At 28–226 (LSLEPVYWNS…EGPLPPPSMP (199 aa)) the chain is on the extracellular side. 2 disulfide bridges follow: C62–C104 and C92–C156. The disordered stretch occupies residues 168–225 (GQSPRGGAVPRKPVSEMPMERDRGAAHSLEPGKENLPGDPTSNATSRGAEGPLPPPSM). Over residues 185–200 (PMERDRGAAHSLEPGK) the composition is skewed to basic and acidic residues. N-linked (GlcNAc...) asparagine glycosylation occurs at N210. A helical membrane pass occupies residues 227–247 (AVAGAAGGLALLLLGVAGAGG). Residues 248–340 (AMCWRRRRAK…QSPPNIYYKV (93 aa)) lie on the Cytoplasmic side of the membrane. The segment at 254-298 (RRAKPSESRHPGPGSFGRGGSLGLGGGGGMGPREAEPGELGIALR) is disordered. Residues 267-284 (GSFGRGGSLGLGGGGGMG) show a composition bias toward gly residues. R271 carries the post-translational modification Omega-N-methylarginine. S274 bears the Phosphoserine mark. A PDZ-binding motif is present at residues 338–340 (YKV).

The protein belongs to the ephrin family. In terms of assembly, interacts with GRIP1 and GRIP2. As to quaternary structure, (Microbial infection) Interacts with nipah virus and hendra virus glycoprotein. Highly expressed in brain; expressed in embryonic floor plate, roof plate and hindbrain segments.

The protein localises to the membrane. Cell surface transmembrane ligand for Eph receptors, a family of receptor tyrosine kinases which are crucial for migration, repulsion and adhesion during neuronal, vascular and epithelial development. Binds promiscuously Eph receptors residing on adjacent cells, leading to contact-dependent bidirectional signaling into neighboring cells. The signaling pathway downstream of the receptor is referred to as forward signaling while the signaling pathway downstream of the ephrin ligand is referred to as reverse signaling. May play a pivotal role in forebrain function. Binds to, and induce the collapse of, commissural axons/growth cones in vitro. May play a role in constraining the orientation of longitudinally projecting axons. Its function is as follows. (Microbial infection) Acts as a receptor for nipah virus and hendra virus. The sequence is that of Ephrin-B3 (EFNB3) from Homo sapiens (Human).